The following is a 150-amino-acid chain: Ribonuclease H (150 aa).

One can recognise an RNase H type-1 domain in the interval 1–141; that stretch reads MKSIEVHTDG…VDVLARNQAI (141 aa). Positions 9, 47, 69, and 133 each coordinate Mg(2+).

It belongs to the RNase H family. In terms of assembly, monomer. It depends on Mg(2+) as a cofactor.

The protein resides in the cytoplasm. It catalyses the reaction Endonucleolytic cleavage to 5'-phosphomonoester.. Its function is as follows. Endonuclease that specifically degrades the RNA of RNA-DNA hybrids. In Xanthomonas campestris pv. campestris (strain 8004), this protein is Ribonuclease H.